The chain runs to 362 residues: Beta-ketoacyl-[acyl-carrier-protein] synthase III 2 (362 aa).

Residues Cys113 and His251 contribute to the active site. An ACP-binding region spans residues 252–256; that stretch reads QANIR. Asn281 is a catalytic residue.

This sequence belongs to the thiolase-like superfamily. FabH family. As to quaternary structure, homodimer.

Its subcellular location is the cytoplasm. It carries out the reaction malonyl-[ACP] + acetyl-CoA + H(+) = 3-oxobutanoyl-[ACP] + CO2 + CoA. Its pathway is lipid metabolism; fatty acid biosynthesis. Catalyzes the condensation reaction of fatty acid synthesis by the addition to an acyl acceptor of two carbons from malonyl-ACP. Catalyzes the first condensation reaction which initiates fatty acid synthesis and may therefore play a role in governing the total rate of fatty acid production. Possesses both acetoacetyl-ACP synthase and acetyl transacylase activities. Its substrate specificity determines the biosynthesis of branched-chain and/or straight-chain of fatty acids. The protein is Beta-ketoacyl-[acyl-carrier-protein] synthase III 2 of Vibrio cholerae serotype O1 (strain ATCC 39315 / El Tor Inaba N16961).